The sequence spans 509 residues: GMP synthase [glutamine-hydrolyzing] (509 aa).

A Glutamine amidotransferase type-1 domain is found at 4-194 (LVLVVDFGGQ…LYNICGLENS (191 aa)). The active-site Nucleophile is C81. Catalysis depends on residues H168 and E170. The GMPS ATP-PPase domain maps to 195-384 (WSMASFAEEK…LGIPHHLVWR (190 aa)). 222–228 (SGGVDSS) contributes to the ATP binding site.

In terms of assembly, homodimer.

It catalyses the reaction XMP + L-glutamine + ATP + H2O = GMP + L-glutamate + AMP + diphosphate + 2 H(+). Its pathway is purine metabolism; GMP biosynthesis; GMP from XMP (L-Gln route): step 1/1. Its function is as follows. Catalyzes the synthesis of GMP from XMP. This is GMP synthase [glutamine-hydrolyzing] from Clostridium perfringens (strain 13 / Type A).